Here is a 124-residue protein sequence, read N- to C-terminus: MPTINQLVRQGRKKSVKKTNTPALKGCPQKRGVCVRVYTTTPKKPNSALRKVARVRLTNGIEVTSYIPGIGHNLQEHSVVMIRGGRVKDLPGVRYHVIRGTLDTLGVSDRRQGRSKYGAKKPSK.

The interval M1–L24 is disordered. Position 89 is a 3-methylthioaspartic acid (D89).

It belongs to the universal ribosomal protein uS12 family. As to quaternary structure, part of the 30S ribosomal subunit. Contacts proteins S8 and S17. May interact with IF1 in the 30S initiation complex.

With S4 and S5 plays an important role in translational accuracy. In terms of biological role, interacts with and stabilizes bases of the 16S rRNA that are involved in tRNA selection in the A site and with the mRNA backbone. Located at the interface of the 30S and 50S subunits, it traverses the body of the 30S subunit contacting proteins on the other side and probably holding the rRNA structure together. The combined cluster of proteins S8, S12 and S17 appears to hold together the shoulder and platform of the 30S subunit. This chain is Small ribosomal subunit protein uS12, found in Desulfotalea psychrophila (strain LSv54 / DSM 12343).